The primary structure comprises 291 residues: tRNA-cytidine(32) 2-sulfurtransferase (291 aa).

A PP-loop motif motif is present at residues 36–41 (SGGKDS). Residues Cys-111, Cys-114, and Cys-202 each coordinate [4Fe-4S] cluster. Residues 259 to 291 (DPWLDAEDEEAEDCGEPSAGDGVVSLGGARGGR) are disordered. Over residues 262 to 273 (LDAEDEEAEDCG) the composition is skewed to acidic residues.

This sequence belongs to the TtcA family. As to quaternary structure, homodimer. Mg(2+) serves as cofactor. The cofactor is [4Fe-4S] cluster.

It is found in the cytoplasm. The catalysed reaction is cytidine(32) in tRNA + S-sulfanyl-L-cysteinyl-[cysteine desulfurase] + AH2 + ATP = 2-thiocytidine(32) in tRNA + L-cysteinyl-[cysteine desulfurase] + A + AMP + diphosphate + H(+). The protein operates within tRNA modification. Functionally, catalyzes the ATP-dependent 2-thiolation of cytidine in position 32 of tRNA, to form 2-thiocytidine (s(2)C32). The sulfur atoms are provided by the cysteine/cysteine desulfurase (IscS) system. This chain is tRNA-cytidine(32) 2-sulfurtransferase, found in Anaeromyxobacter sp. (strain K).